Here is a 478-residue protein sequence, read N- to C-terminus: Ribulose bisphosphate carboxylase large chain (478 aa).

The propeptide occupies 1–2 (MS). Residue Pro3 is modified to N-acetylproline. Position 14 is an N6,N6,N6-trimethyllysine (Lys14). 2 residues coordinate substrate: Asn123 and Thr173. Lys175 serves as the catalytic Proton acceptor. Lys177 is a substrate binding site. 3 residues coordinate Mg(2+): Lys201, Asp203, and Glu204. An N6-carboxylysine modification is found at Lys201. Residue His294 is the Proton acceptor of the active site. Arg295, His327, and Ser379 together coordinate substrate.

The protein belongs to the RuBisCO large chain family. Type I subfamily. In terms of assembly, heterohexadecamer of 8 large chains and 8 small chains; disulfide-linked. The disulfide link is formed within the large subunit homodimers. The cofactor is Mg(2+). In terms of processing, the disulfide bond which can form in the large chain dimeric partners within the hexadecamer appears to be associated with oxidative stress and protein turnover.

The protein localises to the plastid. Its subcellular location is the chloroplast. It catalyses the reaction 2 (2R)-3-phosphoglycerate + 2 H(+) = D-ribulose 1,5-bisphosphate + CO2 + H2O. It carries out the reaction D-ribulose 1,5-bisphosphate + O2 = 2-phosphoglycolate + (2R)-3-phosphoglycerate + 2 H(+). In terms of biological role, ruBisCO catalyzes two reactions: the carboxylation of D-ribulose 1,5-bisphosphate, the primary event in carbon dioxide fixation, as well as the oxidative fragmentation of the pentose substrate in the photorespiration process. Both reactions occur simultaneously and in competition at the same active site. The chain is Ribulose bisphosphate carboxylase large chain from Drimys granadensis.